The sequence spans 465 residues: Putative F-box protein At1g21990 (465 aa).

Residues 8 to 54 form the F-box domain; that stretch reads RDLISGSPDEILGKILSFLPTHHAATTSVLSKRWRNLLPLVDKLELT.

The polypeptide is Putative F-box protein At1g21990 (Arabidopsis thaliana (Mouse-ear cress)).